The primary structure comprises 359 residues: Molybdenum import ATP-binding protein ModC (359 aa).

The 233-residue stretch at 1–233 (MSGLTVSIRG…IDAESEGGGV (233 aa)) folds into the ABC transporter domain. 32-39 (GHSGAGKT) contributes to the ATP binding site. Residues 289 to 355 (AISIRNLLPV…VKAVSVDRAA (67 aa)) enclose the Mop domain.

The protein belongs to the ABC transporter superfamily. Molybdate importer (TC 3.A.1.8) family. As to quaternary structure, the complex is composed of two ATP-binding proteins (ModC), two transmembrane proteins (ModB) and a solute-binding protein (ModA).

The protein localises to the cell inner membrane. The catalysed reaction is molybdate(out) + ATP + H2O = molybdate(in) + ADP + phosphate + H(+). In terms of biological role, part of the ABC transporter complex ModABC involved in molybdenum import. Responsible for energy coupling to the transport system. The protein is Molybdenum import ATP-binding protein ModC of Brucella suis biovar 1 (strain 1330).